The chain runs to 82 residues: Small ribosomal subunit protein bS16 (82 aa).

The protein belongs to the bacterial ribosomal protein bS16 family.

The sequence is that of Small ribosomal subunit protein bS16 from Shigella boydii serotype 18 (strain CDC 3083-94 / BS512).